The primary structure comprises 159 residues: NAD(P)H-quinone oxidoreductase subunit I, chloroplastic (159 aa).

4Fe-4S ferredoxin-type domains lie at 55 to 84 and 95 to 124; these read GRIH…VDWN and KNYS…MTEE. The [4Fe-4S] cluster site is built by Cys-64, Cys-67, Cys-70, Cys-74, Cys-104, Cys-107, Cys-110, and Cys-114.

This sequence belongs to the complex I 23 kDa subunit family. In terms of assembly, NDH is composed of at least 16 different subunits, 5 of which are encoded in the nucleus. [4Fe-4S] cluster is required as a cofactor.

The protein localises to the plastid. It localises to the chloroplast thylakoid membrane. It catalyses the reaction a plastoquinone + NADH + (n+1) H(+)(in) = a plastoquinol + NAD(+) + n H(+)(out). The enzyme catalyses a plastoquinone + NADPH + (n+1) H(+)(in) = a plastoquinol + NADP(+) + n H(+)(out). Its function is as follows. NDH shuttles electrons from NAD(P)H:plastoquinone, via FMN and iron-sulfur (Fe-S) centers, to quinones in the photosynthetic chain and possibly in a chloroplast respiratory chain. The immediate electron acceptor for the enzyme in this species is believed to be plastoquinone. Couples the redox reaction to proton translocation, and thus conserves the redox energy in a proton gradient. The chain is NAD(P)H-quinone oxidoreductase subunit I, chloroplastic from Chara vulgaris (Common stonewort).